Here is a 203-residue protein sequence, read N- to C-terminus: Superoxide dismutase [Mn] (203 aa).

Residues His-27, His-81, Asp-164, and His-168 each contribute to the Mn(2+) site.

Belongs to the iron/manganese superoxide dismutase family. Homodimer. Mn(2+) is required as a cofactor.

The enzyme catalyses 2 superoxide + 2 H(+) = H2O2 + O2. Functionally, destroys superoxide anion radicals which are normally produced within the cells and which are toxic to biological systems. The sequence is that of Superoxide dismutase [Mn] (sodA) from Pseudomonas putida (Arthrobacter siderocapsulatus).